A 360-amino-acid chain; its full sequence is UDP-N-acetylglucosamine--N-acetylmuramyl-(pentapeptide) pyrophosphoryl-undecaprenol N-acetylglucosamine transferase (360 aa).

Residues 13-15 (TGG), R164, S192, and Q293 contribute to the UDP-N-acetyl-alpha-D-glucosamine site.

The protein belongs to the glycosyltransferase 28 family. MurG subfamily.

Its subcellular location is the cell inner membrane. It catalyses the reaction di-trans,octa-cis-undecaprenyl diphospho-N-acetyl-alpha-D-muramoyl-L-alanyl-D-glutamyl-meso-2,6-diaminopimeloyl-D-alanyl-D-alanine + UDP-N-acetyl-alpha-D-glucosamine = di-trans,octa-cis-undecaprenyl diphospho-[N-acetyl-alpha-D-glucosaminyl-(1-&gt;4)]-N-acetyl-alpha-D-muramoyl-L-alanyl-D-glutamyl-meso-2,6-diaminopimeloyl-D-alanyl-D-alanine + UDP + H(+). The protein operates within cell wall biogenesis; peptidoglycan biosynthesis. In terms of biological role, cell wall formation. Catalyzes the transfer of a GlcNAc subunit on undecaprenyl-pyrophosphoryl-MurNAc-pentapeptide (lipid intermediate I) to form undecaprenyl-pyrophosphoryl-MurNAc-(pentapeptide)GlcNAc (lipid intermediate II). The protein is UDP-N-acetylglucosamine--N-acetylmuramyl-(pentapeptide) pyrophosphoryl-undecaprenol N-acetylglucosamine transferase of Chromobacterium violaceum (strain ATCC 12472 / DSM 30191 / JCM 1249 / CCUG 213 / NBRC 12614 / NCIMB 9131 / NCTC 9757 / MK).